Consider the following 490-residue polypeptide: POC1 centriolar protein homolog B (490 aa).

7 WD repeats span residues 16-55 (GHKD…RAFR), 58-97 (GHTD…ESTV), 100-139 (AHTA…FLYS), 142-181 (RHTN…CINI), 184-223 (DYGG…LIQH), 226-265 (VHNA…LIYT), and 268-307 (GHKG…LNYR). Over residues 375 to 388 (DGASSSRAQFTSGM) the composition is skewed to polar residues. The disordered stretch occupies residues 375-427 (DGASSSRAQFTSGMDSGPFRTHTQAREEEDENQEERFAGGMTASPAERSGIPS). Positions 431 to 463 (STLENIVQQLDILTQTVAVLEERLTLTEDKLRT) form a coiled coil.

Belongs to the WD repeat POC1 family.

It is found in the cytoplasm. The protein localises to the cytoskeleton. It localises to the microtubule organizing center. The protein resides in the centrosome. Its subcellular location is the centriole. Plays an important role in centriole assembly and/or stability and ciliogenesis. Involved in early steps of centriole duplication, as well as in the later steps of centriole length control. The protein is POC1 centriolar protein homolog B of Danio rerio (Zebrafish).